The sequence spans 275 residues: MEMO1 family protein Nmar_0215 (275 aa).

It belongs to the MEMO1 family.

The protein is MEMO1 family protein Nmar_0215 of Nitrosopumilus maritimus (strain SCM1).